Consider the following 315-residue polypeptide: 4-hydroxy-3-methylbut-2-enyl diphosphate reductase (315 aa).

C12 contacts [4Fe-4S] cluster. (2E)-4-hydroxy-3-methylbut-2-enyl diphosphate contacts are provided by H41 and H74. Residues H41 and H74 each coordinate dimethylallyl diphosphate. Isopentenyl diphosphate contacts are provided by H41 and H74. Residue C96 participates in [4Fe-4S] cluster binding. H124 is a (2E)-4-hydroxy-3-methylbut-2-enyl diphosphate binding site. A dimethylallyl diphosphate-binding site is contributed by H124. H124 provides a ligand contact to isopentenyl diphosphate. E126 functions as the Proton donor in the catalytic mechanism. Residue T168 coordinates (2E)-4-hydroxy-3-methylbut-2-enyl diphosphate. A [4Fe-4S] cluster-binding site is contributed by C198. S226, S227, N228, and S270 together coordinate (2E)-4-hydroxy-3-methylbut-2-enyl diphosphate. Dimethylallyl diphosphate contacts are provided by S226, S227, N228, and S270. 4 residues coordinate isopentenyl diphosphate: S226, S227, N228, and S270.

This sequence belongs to the IspH family. [4Fe-4S] cluster is required as a cofactor.

It catalyses the reaction isopentenyl diphosphate + 2 oxidized [2Fe-2S]-[ferredoxin] + H2O = (2E)-4-hydroxy-3-methylbut-2-enyl diphosphate + 2 reduced [2Fe-2S]-[ferredoxin] + 2 H(+). The enzyme catalyses dimethylallyl diphosphate + 2 oxidized [2Fe-2S]-[ferredoxin] + H2O = (2E)-4-hydroxy-3-methylbut-2-enyl diphosphate + 2 reduced [2Fe-2S]-[ferredoxin] + 2 H(+). The protein operates within isoprenoid biosynthesis; dimethylallyl diphosphate biosynthesis; dimethylallyl diphosphate from (2E)-4-hydroxy-3-methylbutenyl diphosphate: step 1/1. Its pathway is isoprenoid biosynthesis; isopentenyl diphosphate biosynthesis via DXP pathway; isopentenyl diphosphate from 1-deoxy-D-xylulose 5-phosphate: step 6/6. In terms of biological role, catalyzes the conversion of 1-hydroxy-2-methyl-2-(E)-butenyl 4-diphosphate (HMBPP) into a mixture of isopentenyl diphosphate (IPP) and dimethylallyl diphosphate (DMAPP). Acts in the terminal step of the DOXP/MEP pathway for isoprenoid precursor biosynthesis. This is 4-hydroxy-3-methylbut-2-enyl diphosphate reductase from Pseudomonas putida (strain GB-1).